The sequence spans 360 residues: Flavone O-methyltransferase 1 (360 aa).

127–133 (MNQDKVL) lines the substrate pocket. A substrate binding region spans residues 159 to 177 (AFEYHGTDPRFNRVFNEGM). S-adenosyl-L-methionine-binding residues include glycine 205, aspartate 228, aspartate 248, methionine 249, and lysine 262. Catalysis depends on histidine 266, which acts as the Proton acceptor.

It belongs to the class I-like SAM-binding methyltransferase superfamily. Cation-independent O-methyltransferase family. COMT subfamily. Homodimer.

Its function is as follows. Flavone-specific O-methyltransferase with a preference for flavones &gt; flavonols. Active with tricetin, luteolin, quercitin and eriodictyol. Very low activity with phenylpropanoids (5-hydroxyferulic acid and caffeic acid). Catalyzes the sequential O-methylation of tricetin via 3'-O-methyltricetin, 3',5'-O-methyltricetin to 3',4',5'-O-trimethyltricetin. This Triticum aestivum (Wheat) protein is Flavone O-methyltransferase 1 (OMT1).